The following is a 211-amino-acid chain: MVRRGVGTIETVNALVNDNYALIRNVAKYMLNDKGLTNAEFLRASYRRFIRLRPFVSNRSMVKDTYTDYIRYKYRYEDYPKRMAMIGVQCDNQLNRSQVKNSLSFVAKACSFIDESKGTKFEVARDNTMCRQILKNLLTIHYEKTSHTNEKRTPLRHIFQYSFEHMKDINKSTNSQSYSKPASPKSSLILDLYGEFDRDILLLNNLLNMRL.

It belongs to the IRC19 family.

Its function is as follows. Involved in sporulation and maintenance of the mitochondrial DNA. Is probably involved in a pathway contributing to genomic integrity. The polypeptide is Increased recombination centers protein 19 (IRC19) (Candida glabrata (strain ATCC 2001 / BCRC 20586 / JCM 3761 / NBRC 0622 / NRRL Y-65 / CBS 138) (Yeast)).